The following is a 255-amino-acid chain: Taurine import ATP-binding protein TauB (255 aa).

Residues 2–229 enclose the ABC transporter domain; that stretch reads LQISHLYADY…RFVAGESSRS (228 aa). 34 to 41 contributes to the ATP binding site; the sequence is GPSGCGKT.

Belongs to the ABC transporter superfamily. Taurine importer (TC 3.A.1.17.1) family. As to quaternary structure, the complex is composed of two ATP-binding proteins (TauB), two transmembrane proteins (TauC) and a solute-binding protein (TauA).

It is found in the cell inner membrane. It carries out the reaction taurine(out) + ATP + H2O = taurine(in) + ADP + phosphate + H(+). Part of the ABC transporter complex TauABC involved in taurine import. Responsible for energy coupling to the transport system. The sequence is that of Taurine import ATP-binding protein TauB from Shigella flexneri serotype 5b (strain 8401).